Here is a 314-residue protein sequence, read N- to C-terminus: Ribosomal RNA small subunit methyltransferase H (314 aa).

Residues 40-42 (GGH), D60, F85, D107, and Q114 each bind S-adenosyl-L-methionine.

This sequence belongs to the methyltransferase superfamily. RsmH family.

It localises to the cytoplasm. The catalysed reaction is cytidine(1402) in 16S rRNA + S-adenosyl-L-methionine = N(4)-methylcytidine(1402) in 16S rRNA + S-adenosyl-L-homocysteine + H(+). In terms of biological role, specifically methylates the N4 position of cytidine in position 1402 (C1402) of 16S rRNA. The sequence is that of Ribosomal RNA small subunit methyltransferase H from Hydrogenovibrio crunogenus (strain DSM 25203 / XCL-2) (Thiomicrospira crunogena).